The following is a 116-amino-acid chain: MSTVELLKHIYDINLSYLLLAQRLINQEKASAMFRLGISDSMADALKELTLPQLVKLAETNQLICNFRFEDSETIEQLTKESRVDDLQQIHTGILLSSNLFRQLSEHDTSATKKRA.

This sequence belongs to the FlhD family. Homodimer; disulfide-linked. Forms a heterohexamer composed of two FlhC and four FlhD subunits. Each FlhC binds a FlhD dimer, forming a heterotrimer, and a hexamer assembles by dimerization of two heterotrimers.

It is found in the cytoplasm. Its function is as follows. Functions in complex with FlhC as a master transcriptional regulator that regulates transcription of several flagellar and non-flagellar operons by binding to their promoter region. Activates expression of class 2 flagellar genes, including fliA, which is a flagellum-specific sigma factor that turns on the class 3 genes. Also regulates genes whose products function in a variety of physiological pathways. The protein is Flagellar transcriptional regulator FlhD of Proteus mirabilis (strain HI4320).